The primary structure comprises 34 residues: N(4)-(Beta-N-acetylglucosaminyl)-L-asparaginase (34 aa).

The active-site Nucleophile is T18.

This sequence belongs to the Ntn-hydrolase family. In terms of assembly, heterotetramer of two alpha and two beta chains arranged as a dimer of alpha/beta heterodimers. In terms of processing, cleaved into an alpha and beta chain by autocatalysis; this activates the enzyme. The N-terminal residue of the beta subunit is responsible for the nucleophile hydrolase activity. Post-translationally, N-glycosylated.

The protein resides in the lysosome. The enzyme catalyses N(4)-(beta-N-acetyl-D-glucosaminyl)-L-asparagine + H2O = N-acetyl-beta-D-glucosaminylamine + L-aspartate + H(+). Its function is as follows. Cleaves the GlcNAc-Asn bond which joins oligosaccharides to the peptide of asparagine-linked glycoproteins. The chain is N(4)-(Beta-N-acetylglucosaminyl)-L-asparaginase (AGA) from Sus scrofa (Pig).